The primary structure comprises 817 residues: V-type proton ATPase subunit a1 (817 aa).

Over 1–422 (MEEFLDKLPQ…PAVYSVVTYP (422 aa)) the chain is Cytoplasmic. Residues 97–133 (DIALGDLERQLADHEHEVLEMNSNSEKLRQTYNELLE) are a coiled coil. The helical transmembrane segment at 423 to 443 (FLFAVMFGDWGHGLCLLLGAL) threads the bilayer. Topologically, residues 444-468 (YLLARERKLSTQKLGSFMEMLFGGR) are vacuolar. The chain crosses the membrane as a helical span at residues 469–489 (YVILLMALFSIYCGLIYNEFF). The Cytoplasmic portion of the chain corresponds to 490–547 (SVPFHIFGGSAYKCRDTTCSDAYTVGLIKYRDPYPFGVDPSWRGSRTELPYLNSLKMK). The chain crosses the membrane as a helical span at residues 548–568 (MSILLGIAQMNLGLILSFFNA). The Vacuolar segment spans residues 569 to 580 (RFFGSSLDIRYQ). The helical transmembrane segment at 581–601 (FIPQMIFLNSLFGYLSLLIII) threads the bilayer. The Cytoplasmic portion of the chain corresponds to 602-639 (KWCTGSQADLYHVMIYMFLSPTEELGENELFWGQRPLQ). A helical transmembrane segment spans residues 640-660 (IVLLLLAFIAVPWMLFPKPFA). The Vacuolar segment spans residues 661-758 (LRKIHMERFQ…VLLLAWGYEN (98 aa)). Residues 759–779 (ILIRLIGVAVFAFATAFILLM) form a helical membrane-spanning segment. The Cytoplasmic portion of the chain corresponds to 780–817 (METLSAFLHALRLHWVEFMGKFFNGDGYKFKPFSFALI).

Belongs to the V-ATPase 116 kDa subunit family. V-ATPase is a heteromultimeric enzyme composed of a peripheral catalytic V1 complex (components A to H) attached to an integral membrane V0 proton pore complex (components: a, c, c'', d and e).

Its subcellular location is the vacuole membrane. It is found in the golgi apparatus. The protein localises to the trans-Golgi network membrane. Essential component of the vacuolar proton pump (V-ATPase), a multimeric enzyme that catalyzes the translocation of protons across the membranes. Required for assembly and activity of the V-ATPase. Required during cell expansion. This Arabidopsis thaliana (Mouse-ear cress) protein is V-type proton ATPase subunit a1.